A 424-amino-acid chain; its full sequence is Serine--tRNA ligase (424 aa).

Residue 228 to 230 participates in L-serine binding; the sequence is TAE. ATP is bound at residue 259 to 261; that stretch reads RSE. L-serine is bound at residue E282. 346 to 349 lines the ATP pocket; sequence EISS. S382 is a binding site for L-serine.

Belongs to the class-II aminoacyl-tRNA synthetase family. Type-1 seryl-tRNA synthetase subfamily. In terms of assembly, homodimer. The tRNA molecule binds across the dimer.

It localises to the cytoplasm. It catalyses the reaction tRNA(Ser) + L-serine + ATP = L-seryl-tRNA(Ser) + AMP + diphosphate + H(+). The catalysed reaction is tRNA(Sec) + L-serine + ATP = L-seryl-tRNA(Sec) + AMP + diphosphate + H(+). It functions in the pathway aminoacyl-tRNA biosynthesis; selenocysteinyl-tRNA(Sec) biosynthesis; L-seryl-tRNA(Sec) from L-serine and tRNA(Sec): step 1/1. Functionally, catalyzes the attachment of serine to tRNA(Ser). Is also able to aminoacylate tRNA(Sec) with serine, to form the misacylated tRNA L-seryl-tRNA(Sec), which will be further converted into selenocysteinyl-tRNA(Sec). This Rhodospirillum centenum (strain ATCC 51521 / SW) protein is Serine--tRNA ligase.